The following is a 354-amino-acid chain: Uroporphyrinogen decarboxylase (354 aa).

Substrate is bound by residues 30-34 (RQAGR), aspartate 79, tyrosine 154, serine 209, and histidine 333.

It belongs to the uroporphyrinogen decarboxylase family. Homodimer.

The protein resides in the cytoplasm. It catalyses the reaction uroporphyrinogen III + 4 H(+) = coproporphyrinogen III + 4 CO2. The protein operates within porphyrin-containing compound metabolism; protoporphyrin-IX biosynthesis; coproporphyrinogen-III from 5-aminolevulinate: step 4/4. In terms of biological role, catalyzes the decarboxylation of four acetate groups of uroporphyrinogen-III to yield coproporphyrinogen-III. In Mycolicibacterium gilvum (strain PYR-GCK) (Mycobacterium gilvum (strain PYR-GCK)), this protein is Uroporphyrinogen decarboxylase.